The following is a 259-amino-acid chain: Ribosomal RNA small subunit methyltransferase A (259 aa).

6 residues coordinate S-adenosyl-L-methionine: N13, L15, G40, E61, D85, and N103.

Belongs to the class I-like SAM-binding methyltransferase superfamily. rRNA adenine N(6)-methyltransferase family. RsmA subfamily.

It is found in the cytoplasm. It carries out the reaction adenosine(1518)/adenosine(1519) in 16S rRNA + 4 S-adenosyl-L-methionine = N(6)-dimethyladenosine(1518)/N(6)-dimethyladenosine(1519) in 16S rRNA + 4 S-adenosyl-L-homocysteine + 4 H(+). In terms of biological role, specifically dimethylates two adjacent adenosines (A1518 and A1519) in the loop of a conserved hairpin near the 3'-end of 16S rRNA in the 30S particle. May play a critical role in biogenesis of 30S subunits. The polypeptide is Ribosomal RNA small subunit methyltransferase A (Neisseria meningitidis serogroup C / serotype 2a (strain ATCC 700532 / DSM 15464 / FAM18)).